We begin with the raw amino-acid sequence, 325 residues long: MTITANKRHYLEKVSHQGIISALAFDQRGALKQMMAAHQEGEATVTQIETLKVLVSEELTPYASSILLDPEYGLLATKVKANQTGLLLAYEKTGYDATTTSRLPDCLVEWSVKRLKAAGADAIKFLLYYDVDGDEQINLQKQAYIERIGSECTAEDIPFFLELLSYDERISDNNSAAYAKLKPHKVNGAMSVFSDKRFGVDVLKVEVPVNMAYVEGFTEGEVHYSQAEAIKAFQDQEAASHLPYIYLSAGVSAKLFQETLYFAAAAGAQFSGVLCGRATWAGSVPVYITKGEDEARKWLCTEGFQNIDELNRVLEETASPWTEKI.

This sequence belongs to the aldolase LacD family.

The enzyme catalyses D-tagatofuranose 1,6-bisphosphate = D-glyceraldehyde 3-phosphate + dihydroxyacetone phosphate. Its pathway is carbohydrate metabolism; D-tagatose 6-phosphate degradation; D-glyceraldehyde 3-phosphate and glycerone phosphate from D-tagatose 6-phosphate: step 2/2. The chain is Tagatose 1,6-diphosphate aldolase 1 (lacD1) from Streptococcus pyogenes serotype M3 (strain SSI-1).